The primary structure comprises 549 residues: uncharacterized protein (549 aa).

This is an uncharacterized protein from Methanocaldococcus jannaschii (strain ATCC 43067 / DSM 2661 / JAL-1 / JCM 10045 / NBRC 100440) (Methanococcus jannaschii).